The chain runs to 557 residues: Glucose-6-phosphate isomerase (557 aa).

Glu-361 (proton donor) is an active-site residue. Residues His-392 and Lys-520 contribute to the active site.

This sequence belongs to the GPI family.

It localises to the cytoplasm. The enzyme catalyses alpha-D-glucose 6-phosphate = beta-D-fructose 6-phosphate. Its pathway is carbohydrate biosynthesis; gluconeogenesis. It functions in the pathway carbohydrate degradation; glycolysis; D-glyceraldehyde 3-phosphate and glycerone phosphate from D-glucose: step 2/4. Functionally, catalyzes the reversible isomerization of glucose-6-phosphate to fructose-6-phosphate. This is Glucose-6-phosphate isomerase from Acinetobacter venetianus (strain ATCC 31012 / DSM 23050 / BCRC 14357 / CCUG 45561 / CIP 110063 / KCTC 2702 / LMG 19082 / RAG-1).